The sequence spans 159 residues: Transcription elongation factor GreA (159 aa).

The protein belongs to the GreA/GreB family.

Its function is as follows. Necessary for efficient RNA polymerase transcription elongation past template-encoded arresting sites. The arresting sites in DNA have the property of trapping a certain fraction of elongating RNA polymerases that pass through, resulting in locked ternary complexes. Cleavage of the nascent transcript by cleavage factors such as GreA or GreB allows the resumption of elongation from the new 3'terminus. GreA releases sequences of 2 to 3 nucleotides. The sequence is that of Transcription elongation factor GreA from Buchnera aphidicola subsp. Cinara cedri (strain Cc).